The sequence spans 263 residues: Endonuclease 8 (263 aa).

Proline 2 functions as the Schiff-base intermediate with DNA in the catalytic mechanism. The active-site Proton donor is the glutamate 3. Lysine 53 serves as the catalytic Proton donor; for beta-elimination activity. Residues glutamine 70, arginine 125, and asparagine 169 each coordinate DNA. Residues 229 to 263 (KVFHRDGEPCERCGSIIEKTTLSSRPFYWCPGCQH) form an FPG-type zinc finger. Arginine 253 serves as the catalytic Proton donor; for delta-elimination activity.

This sequence belongs to the FPG family. The cofactor is Zn(2+).

The catalysed reaction is 2'-deoxyribonucleotide-(2'-deoxyribose 5'-phosphate)-2'-deoxyribonucleotide-DNA = a 3'-end 2'-deoxyribonucleotide-(2,3-dehydro-2,3-deoxyribose 5'-phosphate)-DNA + a 5'-end 5'-phospho-2'-deoxyribonucleoside-DNA + H(+). Its function is as follows. Involved in base excision repair of DNA damaged by oxidation or by mutagenic agents. Acts as a DNA glycosylase that recognizes and removes damaged bases. Has a preference for oxidized pyrimidines, such as thymine glycol, 5,6-dihydrouracil and 5,6-dihydrothymine. Has AP (apurinic/apyrimidinic) lyase activity and introduces nicks in the DNA strand. Cleaves the DNA backbone by beta-delta elimination to generate a single-strand break at the site of the removed base with both 3'- and 5'-phosphates. This chain is Endonuclease 8, found in Escherichia coli (strain K12 / MC4100 / BW2952).